A 65-amino-acid chain; its full sequence is MPKIKTVRGAAKRFKKTAGGGFKRKHANLRHILTKKSTKRKRHLRPKGMISKGDLGLVVACLPYA.

Belongs to the bacterial ribosomal protein bL35 family.

The sequence is that of Large ribosomal subunit protein bL35 from Proteus mirabilis (strain HI4320).